The sequence spans 647 residues: 1-deoxy-D-xylulose-5-phosphate synthase (647 aa).

Thiamine diphosphate-binding positions include His79 and 120–122 (GHA). Asp152 contacts Mg(2+). Residues 153 to 154 (GS), Asn181, Phe293, and Glu377 contribute to the thiamine diphosphate site. Asn181 is a binding site for Mg(2+).

The protein belongs to the transketolase family. DXPS subfamily. Homodimer. The cofactor is Mg(2+). Thiamine diphosphate is required as a cofactor.

The enzyme catalyses D-glyceraldehyde 3-phosphate + pyruvate + H(+) = 1-deoxy-D-xylulose 5-phosphate + CO2. It functions in the pathway metabolic intermediate biosynthesis; 1-deoxy-D-xylulose 5-phosphate biosynthesis; 1-deoxy-D-xylulose 5-phosphate from D-glyceraldehyde 3-phosphate and pyruvate: step 1/1. Catalyzes the acyloin condensation reaction between C atoms 2 and 3 of pyruvate and glyceraldehyde 3-phosphate to yield 1-deoxy-D-xylulose-5-phosphate (DXP). This Bacteroides thetaiotaomicron (strain ATCC 29148 / DSM 2079 / JCM 5827 / CCUG 10774 / NCTC 10582 / VPI-5482 / E50) protein is 1-deoxy-D-xylulose-5-phosphate synthase.